A 282-amino-acid polypeptide reads, in one-letter code: Ribosome biogenesis GTPase A (282 aa).

A CP-type G domain is found at 14–178; sequence RREVTEKLKL…LLDTPGILWP (165 aa). GTP-binding positions include 58–61, 86–87, 130–135, and G174; these read NKAD, NS, and NVGKST.

This sequence belongs to the TRAFAC class YlqF/YawG GTPase family. MTG1 subfamily. In terms of assembly, interacts with ctc. Interacts with the immature 50S ribosome subunit. 2 molecules of RbgA bind to one 50S subunit.

The protein resides in the cytoplasm. Functionally, essential protein that is required for a late step of 50S ribosomal subunit assembly. Has GTPase activity that is stimulated by interaction with the immature 50S ribosome subunit. Binds to the 23S rRNA. Required for the association of ribosomal proteins RplP and RpmA with the large subunit. This Bacillus subtilis (strain 168) protein is Ribosome biogenesis GTPase A (rbgA).